Consider the following 587-residue polypeptide: uncharacterized protein (587 aa).

A signal peptide spans 1–21 (MANRLLIYGLILWVSIIGSFA). Topologically, residues 22–541 (LDRNKTAQNA…LEKEVSFQRR (520 aa)) are lumenal. Asparagine 25 carries N-linked (GlcNAc...) asparagine glycosylation. The tract at residues 44 to 108 (GSTTNVQKEH…RNPGDSSNSF (65 aa)) is disordered. Residues 63-90 (RTHDFRQASKVDIRQADIRENGERKEQD) are compositionally biased toward basic and acidic residues. Polar residues predominate over residues 91-108 (ALTQPATPRNPGDSSNSF). One can recognise an SUN domain in the interval 163 to 331 (NEWSEREENQ…SLIKVYGKSM (169 aa)). 5 N-linked (GlcNAc...) asparagine glycosylation sites follow: asparagine 378, asparagine 381, asparagine 408, asparagine 448, and asparagine 486. Residues 542-562 (IVYASFFAFVGLISYLLITRE) form a helical membrane-spanning segment. Over 563–587 (LYFEDFEESKNGAIEKADIVQQAIR) the chain is Cytoplasmic.

Belongs to the SLP1 family. As to quaternary structure, interacts with EMP65.

The protein resides in the endoplasmic reticulum membrane. In terms of biological role, may be involved in membrane protein folding. Required for localization of MPS3 to the nuclear envelope. This is an uncharacterized protein from Saccharomyces cerevisiae (strain ATCC 204508 / S288c) (Baker's yeast).